The following is a 185-amino-acid chain: Crossover junction endodeoxyribonuclease RuvC (185 aa).

Active-site residues include Asp-7, Glu-68, and Asp-141. Mg(2+)-binding residues include Asp-7, Glu-68, and Asp-141.

The protein belongs to the RuvC family. Homodimer which binds Holliday junction (HJ) DNA. The HJ becomes 2-fold symmetrical on binding to RuvC with unstacked arms; it has a different conformation from HJ DNA in complex with RuvA. In the full resolvosome a probable DNA-RuvA(4)-RuvB(12)-RuvC(2) complex forms which resolves the HJ. Requires Mg(2+) as cofactor.

Its subcellular location is the cytoplasm. The enzyme catalyses Endonucleolytic cleavage at a junction such as a reciprocal single-stranded crossover between two homologous DNA duplexes (Holliday junction).. The RuvA-RuvB-RuvC complex processes Holliday junction (HJ) DNA during genetic recombination and DNA repair. Endonuclease that resolves HJ intermediates. Cleaves cruciform DNA by making single-stranded nicks across the HJ at symmetrical positions within the homologous arms, yielding a 5'-phosphate and a 3'-hydroxyl group; requires a central core of homology in the junction. The consensus cleavage sequence is 5'-(A/T)TT(C/G)-3'. Cleavage occurs on the 3'-side of the TT dinucleotide at the point of strand exchange. HJ branch migration catalyzed by RuvA-RuvB allows RuvC to scan DNA until it finds its consensus sequence, where it cleaves and resolves the cruciform DNA. This is Crossover junction endodeoxyribonuclease RuvC from Helicobacter hepaticus (strain ATCC 51449 / 3B1).